A 157-amino-acid chain; its full sequence is Large ribosomal subunit protein uL22 (157 aa).

It belongs to the universal ribosomal protein uL22 family. In terms of assembly, part of the 50S ribosomal subunit.

In terms of biological role, this protein binds specifically to 23S rRNA. It makes multiple contacts with different domains of the 23S rRNA in the assembled 50S subunit and ribosome. Its function is as follows. The globular domain of the protein is located near the polypeptide exit tunnel on the outside of the subunit, while an extended beta-hairpin is found that lines the wall of the exit tunnel in the center of the 70S ribosome. This is Large ribosomal subunit protein uL22 from Staphylothermus marinus (strain ATCC 43588 / DSM 3639 / JCM 9404 / F1).